We begin with the raw amino-acid sequence, 369 residues long: DNA replication and repair protein RecF (369 aa).

Position 30–37 (30–37 (GQNGMGKT)) interacts with ATP.

It belongs to the RecF family.

The protein resides in the cytoplasm. The RecF protein is involved in DNA metabolism; it is required for DNA replication and normal SOS inducibility. RecF binds preferentially to single-stranded, linear DNA. It also seems to bind ATP. In Bacteroides thetaiotaomicron (strain ATCC 29148 / DSM 2079 / JCM 5827 / CCUG 10774 / NCTC 10582 / VPI-5482 / E50), this protein is DNA replication and repair protein RecF.